The following is a 168-amino-acid chain: Small ribosomal subunit protein uS5 (168 aa).

Positions 13–76 (LEENVVAINR…EDAKRKLITV (64 aa)) constitute an S5 DRBM domain.

It belongs to the universal ribosomal protein uS5 family. In terms of assembly, part of the 30S ribosomal subunit. Contacts proteins S4 and S8.

In terms of biological role, with S4 and S12 plays an important role in translational accuracy. Located at the back of the 30S subunit body where it stabilizes the conformation of the head with respect to the body. This Leuconostoc mesenteroides subsp. mesenteroides (strain ATCC 8293 / DSM 20343 / BCRC 11652 / CCM 1803 / JCM 6124 / NCDO 523 / NBRC 100496 / NCIMB 8023 / NCTC 12954 / NRRL B-1118 / 37Y) protein is Small ribosomal subunit protein uS5.